We begin with the raw amino-acid sequence, 185 residues long: Adenine phosphoribosyltransferase (185 aa).

It belongs to the purine/pyrimidine phosphoribosyltransferase family. Homodimer.

It localises to the cytoplasm. It catalyses the reaction AMP + diphosphate = 5-phospho-alpha-D-ribose 1-diphosphate + adenine. The protein operates within purine metabolism; AMP biosynthesis via salvage pathway; AMP from adenine: step 1/1. Its function is as follows. Catalyzes a salvage reaction resulting in the formation of AMP, that is energically less costly than de novo synthesis. This is Adenine phosphoribosyltransferase from Pectobacterium atrosepticum (strain SCRI 1043 / ATCC BAA-672) (Erwinia carotovora subsp. atroseptica).